The primary structure comprises 200 residues: ATP-dependent Clp protease proteolytic subunit (200 aa).

The active-site Nucleophile is Ser-98. Residue His-123 is part of the active site.

This sequence belongs to the peptidase S14 family. Fourteen ClpP subunits assemble into 2 heptameric rings which stack back to back to give a disk-like structure with a central cavity, resembling the structure of eukaryotic proteasomes.

Its subcellular location is the cytoplasm. It catalyses the reaction Hydrolysis of proteins to small peptides in the presence of ATP and magnesium. alpha-casein is the usual test substrate. In the absence of ATP, only oligopeptides shorter than five residues are hydrolyzed (such as succinyl-Leu-Tyr-|-NHMec, and Leu-Tyr-Leu-|-Tyr-Trp, in which cleavage of the -Tyr-|-Leu- and -Tyr-|-Trp bonds also occurs).. In terms of biological role, cleaves peptides in various proteins in a process that requires ATP hydrolysis. Has a chymotrypsin-like activity. Plays a major role in the degradation of misfolded proteins. The polypeptide is ATP-dependent Clp protease proteolytic subunit (Deinococcus geothermalis (strain DSM 11300 / CIP 105573 / AG-3a)).